Reading from the N-terminus, the 184-residue chain is MNAASTNNGPKIQLIGEVLEDAGLISEAQLQTALFDQQIYSDLKFGEILTLRGWIRQPTADFFAKYAKQELILIDSKRLGDYLLEADLLTTEQLALILDEQRLNHMLFGSLAVLKGYIPQKTLNFFLRRILNQHVGDRRFWQTTHHPKTSLAQQPNAKATQPPLSKETLNTAKETDPTEINWIG.

The disordered stretch occupies residues 146 to 177; that stretch reads HPKTSLAQQPNAKATQPPLSKETLNTAKETDP. Residues 150–172 show a composition bias toward polar residues; that stretch reads SLAQQPNAKATQPPLSKETLNTA.

This is an uncharacterized protein from Picosynechococcus sp. (strain ATCC 27264 / PCC 7002 / PR-6) (Agmenellum quadruplicatum).